A 164-amino-acid polypeptide reads, in one-letter code: Shikimate kinase (164 aa).

10-15 (GVGKTT) is a binding site for ATP. Residue Thr14 participates in Mg(2+) binding. The substrate site is built by Asp28, Arg52, and Gly75. Residue Arg116 coordinates ATP. Arg134 provides a ligand contact to substrate. Arg151 contributes to the ATP binding site.

It belongs to the shikimate kinase family. Monomer. The cofactor is Mg(2+).

The protein localises to the cytoplasm. It catalyses the reaction shikimate + ATP = 3-phosphoshikimate + ADP + H(+). The protein operates within metabolic intermediate biosynthesis; chorismate biosynthesis; chorismate from D-erythrose 4-phosphate and phosphoenolpyruvate: step 5/7. Functionally, catalyzes the specific phosphorylation of the 3-hydroxyl group of shikimic acid using ATP as a cosubstrate. The polypeptide is Shikimate kinase (Streptococcus equi subsp. zooepidemicus (strain MGCS10565)).